A 137-amino-acid polypeptide reads, in one-letter code: Ribosomal RNA large subunit methyltransferase H (137 aa).

S-adenosyl-L-methionine is bound by residues L56, G85, and 104-109; that span reads LSPLTL.

The protein belongs to the RNA methyltransferase RlmH family. Homodimer.

The protein localises to the cytoplasm. It catalyses the reaction pseudouridine(1915) in 23S rRNA + S-adenosyl-L-methionine = N(3)-methylpseudouridine(1915) in 23S rRNA + S-adenosyl-L-homocysteine + H(+). Functionally, specifically methylates the pseudouridine at position 1915 (m3Psi1915) in 23S rRNA. In Thermus thermophilus (strain ATCC 27634 / DSM 579 / HB8), this protein is Ribosomal RNA large subunit methyltransferase H.